Here is a 251-residue protein sequence, read N- to C-terminus: Phosphoribosylaminoimidazole-succinocarboxamide synthase (251 aa).

This sequence belongs to the SAICAR synthetase family.

It catalyses the reaction 5-amino-1-(5-phospho-D-ribosyl)imidazole-4-carboxylate + L-aspartate + ATP = (2S)-2-[5-amino-1-(5-phospho-beta-D-ribosyl)imidazole-4-carboxamido]succinate + ADP + phosphate + 2 H(+). Its pathway is purine metabolism; IMP biosynthesis via de novo pathway; 5-amino-1-(5-phospho-D-ribosyl)imidazole-4-carboxamide from 5-amino-1-(5-phospho-D-ribosyl)imidazole-4-carboxylate: step 1/2. The sequence is that of Phosphoribosylaminoimidazole-succinocarboxamide synthase from Ruegeria pomeroyi (strain ATCC 700808 / DSM 15171 / DSS-3) (Silicibacter pomeroyi).